We begin with the raw amino-acid sequence, 904 residues long: UPF0182 protein CKL_0015 (904 aa).

A run of 7 helical transmembrane segments spans residues 9–29 (SLIV…DFII), 47–67 (LIAI…SIVL), 96–116 (IFII…AATY), 157–177 (ILSL…TLSV), 208–228 (LAVL…LKCI), 253–273 (YKII…SILV), and 279–299 (IIVS…SYTV).

The protein belongs to the UPF0182 family.

It is found in the cell membrane. This is UPF0182 protein CKL_0015 from Clostridium kluyveri (strain ATCC 8527 / DSM 555 / NBRC 12016 / NCIMB 10680 / K1).